A 575-amino-acid polypeptide reads, in one-letter code: Arginine--tRNA ligase (575 aa).

The 'HIGH' region signature appears at 131–141 (ANPTGPLHVGH).

Belongs to the class-I aminoacyl-tRNA synthetase family. In terms of assembly, monomer.

The protein resides in the cytoplasm. The catalysed reaction is tRNA(Arg) + L-arginine + ATP = L-arginyl-tRNA(Arg) + AMP + diphosphate. In Jannaschia sp. (strain CCS1), this protein is Arginine--tRNA ligase.